A 144-amino-acid chain; its full sequence is Large ribosomal subunit protein uL13 (144 aa).

This sequence belongs to the universal ribosomal protein uL13 family. Part of the 50S ribosomal subunit.

Its function is as follows. This protein is one of the early assembly proteins of the 50S ribosomal subunit, although it is not seen to bind rRNA by itself. It is important during the early stages of 50S assembly. The chain is Large ribosomal subunit protein uL13 from Lawsonia intracellularis (strain PHE/MN1-00).